The chain runs to 255 residues: MNDYIVVKCGGSMLDQLNDVFFDCIKKLQQQYKVVIVHGGGPEIDAKLKDCNINVEKRDGLRVTPKEVMDVVQMVLCGSTNKKFVMNLQKHNLLAVGCSGCDGKLLQVQPVSEEIGYVGEVSYVETALLKGLINMNYIPVIAPIGIHDNEIYNINADTAAAGIAAALSAKELILITDVDGILHEGKLVKKTDESEIATFIEKGVITGGMIPKVQAALASLKMGVQKISIVNGTKDFTEDTGECIGTTVTRGVSIV.

Residues 40 to 41 (GG), Arg-62, and Asn-153 contribute to the substrate site.

This sequence belongs to the acetylglutamate kinase family. ArgB subfamily.

It is found in the cytoplasm. The enzyme catalyses N-acetyl-L-glutamate + ATP = N-acetyl-L-glutamyl 5-phosphate + ADP. Its pathway is amino-acid biosynthesis; L-arginine biosynthesis; N(2)-acetyl-L-ornithine from L-glutamate: step 2/4. Its function is as follows. Catalyzes the ATP-dependent phosphorylation of N-acetyl-L-glutamate. The sequence is that of Acetylglutamate kinase from Bacillus thuringiensis subsp. konkukian (strain 97-27).